Here is a 621-residue protein sequence, read N- to C-terminus: Chaperone protein HtpG (621 aa).

The a; substrate-binding stretch occupies residues 1-328 (MIQEKKKFDA…SEDLPLNISR (328 aa)). Residues 329–544 (ESLQHNSVLE…DAAMDIRMER (216 aa)) are b. The segment at 475 to 494 (SDIDVEQTTSQSEAKNTDSK) is disordered. Residues 545–621 (FLIEQKQIAN…LNDIVQKAIL (77 aa)) are c.

Belongs to the heat shock protein 90 family. In terms of assembly, homodimer.

It is found in the cytoplasm. Molecular chaperone. Has ATPase activity. The protein is Chaperone protein HtpG of Rickettsia rickettsii (strain Iowa).